The following is a 328-amino-acid chain: 4-hydroxythreonine-4-phosphate dehydrogenase (328 aa).

2 residues coordinate substrate: His-134 and Thr-135. His-164, His-209, and His-265 together coordinate a divalent metal cation. Residues Lys-273, Asn-282, and Arg-291 each coordinate substrate.

The protein belongs to the PdxA family. As to quaternary structure, homodimer. It depends on Zn(2+) as a cofactor. Requires Mg(2+) as cofactor. Co(2+) is required as a cofactor.

The protein resides in the cytoplasm. The catalysed reaction is 4-(phosphooxy)-L-threonine + NAD(+) = 3-amino-2-oxopropyl phosphate + CO2 + NADH. The protein operates within cofactor biosynthesis; pyridoxine 5'-phosphate biosynthesis; pyridoxine 5'-phosphate from D-erythrose 4-phosphate: step 4/5. Its function is as follows. Catalyzes the NAD(P)-dependent oxidation of 4-(phosphooxy)-L-threonine (HTP) into 2-amino-3-oxo-4-(phosphooxy)butyric acid which spontaneously decarboxylates to form 3-amino-2-oxopropyl phosphate (AHAP). The polypeptide is 4-hydroxythreonine-4-phosphate dehydrogenase (Vibrio vulnificus (strain YJ016)).